Here is a 159-residue protein sequence, read N- to C-terminus: Ribosomal RNA large subunit methyltransferase H (159 aa).

Gly-108 is an S-adenosyl-L-methionine binding site.

It belongs to the RNA methyltransferase RlmH family. In terms of assembly, homodimer.

The protein localises to the cytoplasm. The enzyme catalyses pseudouridine(1915) in 23S rRNA + S-adenosyl-L-methionine = N(3)-methylpseudouridine(1915) in 23S rRNA + S-adenosyl-L-homocysteine + H(+). Specifically methylates the pseudouridine at position 1915 (m3Psi1915) in 23S rRNA. The polypeptide is Ribosomal RNA large subunit methyltransferase H (Lactobacillus johnsonii (strain CNCM I-12250 / La1 / NCC 533)).